A 63-amino-acid chain; its full sequence is Large ribosomal subunit protein bL32 (63 aa).

The disordered stretch occupies residues 1-20; sequence MANPKAKMSKSRRDKRRAQF. The segment covering 7–18 has biased composition (basic residues); that stretch reads KMSKSRRDKRRA.

It belongs to the bacterial ribosomal protein bL32 family.

In Chlorobaculum tepidum (strain ATCC 49652 / DSM 12025 / NBRC 103806 / TLS) (Chlorobium tepidum), this protein is Large ribosomal subunit protein bL32.